A 741-amino-acid polypeptide reads, in one-letter code: Zinc transporter ZIP6 (741 aa).

Residues 1–20 (MATNLSVIMILTFALWVTNP) form the signal peptide. The Extracellular segment spans residues 21-311 (LHELQSTAAF…PKTYSLQIAW (291 aa)). N68 carries an N-linked (GlcNAc...) asparagine glycan. Over residues 95 to 111 (HDHERHSDHERHSDHER) the composition is skewed to basic and acidic residues. Disordered stretches follow at residues 95-172 (HDHE…EVTS) and 189-213 (ETPK…EKSR). The span at 135–147 (DNSGKNPNTSQGK) shows a compositional bias: polar residues. A glycan (N-linked (GlcNAc...) asparagine) is linked at N142. Residues 150-162 (RPAEHVNGRRNGK) show a composition bias toward basic and acidic residues. Low complexity predominate over residues 163–172 (ESASSSEVTS). Residues 200–209 (INPSTPPSIT) show a composition bias toward polar residues. Residues N226, N251, and N268 are each glycosylated (N-linked (GlcNAc...) asparagine). A helical transmembrane segment spans residues 312-332 (LGGFIAISIISFLSLLGVILV). At 333–341 (PLMNRVFFK) the chain is on the cytoplasmic side. A helical membrane pass occupies residues 342–362 (FLLSFLVALAVGTLSGDALLH). At 363–409 (LLPHSHASHHHSHSHEEPAMEMKRGPLFSHLSAQNLEESSYFDSTWK) the chain is on the extracellular side. A helical membrane pass occupies residues 410–430 (GLTALGGLYFMFLVEHVLTLI). At 431-643 (KQFKDKKKKN…LKAGMTVKQA (213 aa)) the chain is on the cytoplasmic side. The interval 434 to 494 (KDKKKKNQKK…QEPSPFDSQQ (61 aa)) is disordered. Residues 450–475 (VESKKQLSKYESQLSTNEEKVDTGER) adopt a coiled-coil conformation. Phosphoserine is present on residues S457 and S464. A compositionally biased stretch (basic and acidic residues) spans 466 to 477 (NEEKVDTGERPE). Polar residues predominate over residues 481-494 (QADSQEPSPFDSQQ). A helical membrane pass occupies residues 644–664 (VLYNALSAMLAYLGMATGIFI). Over 665 to 672 (GHYAENVS) the chain is Extracellular. A glycan (N-linked (GlcNAc...) asparagine) is linked at N670. A helical membrane pass occupies residues 673–693 (MWIFALTAGLFMYVALVDMVP). The Cytoplasmic portion of the chain corresponds to 694-710 (EMLHNDASDHGCSRWGY). Residues 711 to 731 (FFLQNAGILLGFGIMLLISIF) traverse the membrane as a helical segment. Residues 732–741 (EHKIVFRINF) are Extracellular-facing.

Belongs to the ZIP transporter (TC 2.A.5) family. In terms of assembly, interacts with SLC39A10; which triggers cells to undergo EMT and mitosis. Found in a complex with SLC39A6, SLC39A10 and with the 'Ser-727' phosphorylated form of STAT3 throughout mitosis. Found in a complex with SLC39A6, SLC39A10 and with NCAM1; this complex controls NCAM1 phosphorylation and integration into focal adhesion complexes during epithelial-to-mesenchymal transition (EMT). Found in a complex with SLC39A6, SLC39A10 and with GSK3B that controls NCAM1 phosphorylation. Cleaved on the N-terminus before locating to the plasma membrane. Post-translationally, N-glycosylated. In terms of processing, phosphorylated by ZAP70 in response to TCR stimulation leading to its activation. In terms of tissue distribution, expressed in the endothelial cells of the brain capillaries.

It is found in the cell membrane. The protein localises to the cell projection. It localises to the lamellipodium membrane. Its subcellular location is the membrane raft. The protein resides in the apical cell membrane. The enzyme catalyses Zn(2+)(in) = Zn(2+)(out). Zinc-influx transporter which plays a role in zinc homeostasis and in the induction of epithelial-to-mesenchymal transition (EMT). When associated with SLC39A10, the heterodimer formed by SLC39A10 and SLC39A6 mediates cellular zinc uptake to trigger cells to undergo epithelial- to-mesenchymal transition (EMT). The SLC39A10-SLC39A6 heterodimer also controls NCAM1 phosphorylation and its integration into focal adhesion complexes during EMT. Zinc influx inactivates GSK3B, enabling unphosphorylated SNAI1 in the nucleus to down-regulate adherence genes such as CDH1, causing loss of cell adherence. In addition, the SLC39A10-SLC39A6 heterodimer plays an essentiel role in initiating mitosis by importing zinc into cells to initiate a pathway resulting in the onset of mitosis. Participates in the T-cell receptor signaling regulation by mediating cellular zinc uptake into activated lymphocytes. Regulates the zinc influx necessary for proper meiotic progression to metaphase II (MII) that allows the oocyte-to-egg transition. The chain is Zinc transporter ZIP6 from Rattus norvegicus (Rat).